The primary structure comprises 185 residues: Virulence membrane protein PagC (185 aa).

A signal peptide spans 1-23; sequence MKNIILSTLVITTSVLVVNVAQA.

This sequence belongs to the outer membrane OOP (TC 1.B.6) superfamily. Ail family.

Its subcellular location is the cell outer membrane. Its function is as follows. Essential for full virulence and survival within macrophages. This chain is Virulence membrane protein PagC (pagC), found in Salmonella typhimurium (strain LT2 / SGSC1412 / ATCC 700720).